Consider the following 60-residue polypeptide: Large ribosomal subunit protein bL32 (60 aa).

A disordered region spans residues 1–60 (MAVQQVKKSRSKRDIRRSHDSLTNPTLSTDKSTGELHLRHHVSPNGFYKGRKVVDTKSED). The span at 7–16 (KKSRSKRDIR) shows a compositional bias: basic residues. Residues 22–31 (LTNPTLSTDK) are compositionally biased toward polar residues.

This sequence belongs to the bacterial ribosomal protein bL32 family.

The chain is Large ribosomal subunit protein bL32 from Francisella tularensis subsp. tularensis (strain SCHU S4 / Schu 4).